Here is a 245-residue protein sequence, read N- to C-terminus: 1-(5-phosphoribosyl)-5-[(5-phosphoribosylamino)methylideneamino] imidazole-4-carboxamide isomerase (245 aa).

Residue D8 is the Proton acceptor of the active site. Catalysis depends on D131, which acts as the Proton donor.

The protein belongs to the HisA/HisF family.

It is found in the cytoplasm. It carries out the reaction 1-(5-phospho-beta-D-ribosyl)-5-[(5-phospho-beta-D-ribosylamino)methylideneamino]imidazole-4-carboxamide = 5-[(5-phospho-1-deoxy-D-ribulos-1-ylimino)methylamino]-1-(5-phospho-beta-D-ribosyl)imidazole-4-carboxamide. Its pathway is amino-acid biosynthesis; L-histidine biosynthesis; L-histidine from 5-phospho-alpha-D-ribose 1-diphosphate: step 4/9. This chain is 1-(5-phosphoribosyl)-5-[(5-phosphoribosylamino)methylideneamino] imidazole-4-carboxamide isomerase, found in Verminephrobacter eiseniae (strain EF01-2).